The following is a 238-amino-acid chain: LexA repressor (238 aa).

Positions phenylalanine 26–threonine 46 form a DNA-binding region, H-T-H motif. Active-site for autocatalytic cleavage activity residues include serine 158 and lysine 196.

The protein belongs to the peptidase S24 family. As to quaternary structure, homodimer.

The catalysed reaction is Hydrolysis of Ala-|-Gly bond in repressor LexA.. In terms of biological role, represses a number of genes involved in the response to DNA damage (SOS response), including recA and lexA. In the presence of single-stranded DNA, RecA interacts with LexA causing an autocatalytic cleavage which disrupts the DNA-binding part of LexA, leading to derepression of the SOS regulon and eventually DNA repair. This chain is LexA repressor, found in Sinorhizobium medicae (strain WSM419) (Ensifer medicae).